We begin with the raw amino-acid sequence, 387 residues long: DNA double-strand break repair protein Mre11 (387 aa).

Asp-11, His-13, Asp-52, and Asp-87 together coordinate Mn(2+). Residue His-88 is the Proton donor of the active site. Mn(2+) contacts are provided by His-159, His-190, and His-192.

It belongs to the MRE11/RAD32 family. In terms of assembly, homodimer. Forms a heterotetramer composed of two Mre11 subunits and two Rad50 subunits. Interacts with HerA. Mn(2+) is required as a cofactor.

Nuclease activity is regulated by Rad50. Functionally, part of the Rad50/Mre11 complex, which is involved in the early steps of DNA double-strand break (DSB) repair. The complex may facilitate opening of the processed DNA ends to aid in the recruitment of HerA and NurA. Mre11 binds to DSB ends and has both double-stranded 3'-5' exonuclease activity and single-stranded endonuclease activity. This chain is DNA double-strand break repair protein Mre11, found in Sulfurisphaera tokodaii (strain DSM 16993 / JCM 10545 / NBRC 100140 / 7) (Sulfolobus tokodaii).